Reading from the N-terminus, the 461-residue chain is MMEDTIAAISTPLGEGGIGIVRVSGPGAIEAVKNVFIPRQSKDLSKVPSFTLHYGKIVDPADGKIVDEVLVSVMRAPKSYTGEDVVEINCHGGIVAVEKVLELILKQGIRLAEPGEFTKRAFLNGRIDLSQAEAVIDIIRAKTEASLKLAGRQLSGELREKINAVRQKIINILAFIEVSIDYPEYEFDEVTPETALKNIDEIINDVRRLLSSYERGRILREGITAVIAGKPNVGKSSLLNALLRKKRAIVTDIPGTTRDVIEDYLNLKGIPVKIVDTAGIRETEDLVEKLGVEKTREYLNQADVTLFVVDVSIGIDEDDEKILSLINKDKSLLVINKIDLLQGKVNFEQYAVKTGIKNFVPFSARNFEGLEILENKLYEILIPEQEGEGESALISNLRHKNYLEKALNSLLSAKESIASGEPVDLVAIDLNEALRELGAITGDALGDEIINEIFSQFCVGK.

Positions 22, 87, and 126 each coordinate (6S)-5-formyl-5,6,7,8-tetrahydrofolate. Residues 222–382 (GITAVIAGKP…LENKLYEILI (161 aa)) form the TrmE-type G domain. Asn232 lines the K(+) pocket. Residues 232–237 (NVGKSS), 251–257 (TDIPGTT), 276–279 (DTAG), and 363–365 (SAR) contribute to the GTP site. Residue Ser236 coordinates Mg(2+). Thr251, Ile253, and Thr256 together coordinate K(+). A Mg(2+)-binding site is contributed by Thr257. (6S)-5-formyl-5,6,7,8-tetrahydrofolate is bound at residue Lys461.

This sequence belongs to the TRAFAC class TrmE-Era-EngA-EngB-Septin-like GTPase superfamily. TrmE GTPase family. In terms of assembly, homodimer. Heterotetramer of two MnmE and two MnmG subunits. K(+) is required as a cofactor.

It is found in the cytoplasm. Exhibits a very high intrinsic GTPase hydrolysis rate. Involved in the addition of a carboxymethylaminomethyl (cmnm) group at the wobble position (U34) of certain tRNAs, forming tRNA-cmnm(5)s(2)U34. This is tRNA modification GTPase MnmE from Carboxydothermus hydrogenoformans (strain ATCC BAA-161 / DSM 6008 / Z-2901).